The primary structure comprises 398 residues: MSQNVYIVSTARTPIGSFQGSLSSKTAVELGAVALKGALAKVPELDASKDFDEIIFGNVLSANLGQAPARQVALAAGLSNHIVASTVNKVCASAMKAIILGAQSIKCGNADVVVAGGCESMTNAPYYMPAARAGAKFGQTVLVDGVERDGLNDAYDGLAMGVHAEKCARDWDITREQQDNFAIESYQKSQKSQKEGKFDNEIVPVTIKGFRGKPDTQVTKDEEPARLHVEKLRSARTVFQKENGTVTAANASPINDGAAAVILVSEKVLKEKNLKPLAIIKGWGEAAHQPADFTWAPSLAVPKALKHAGIEDINSVDYFEFNEAFSVVGLVNTKILKLDPSKVNVYGGAVALGHPLGCSGARVVVTLLSILQQEGGKIGVAAICNGGGGASSIVIEKI.

Serine 2 bears the N-acetylserine mark. Residue cysteine 91 is the Acyl-thioester intermediate of the active site. 2 residues coordinate CoA: tyrosine 186 and lysine 231. Position 186 (tyrosine 186) interacts with K(+). K(+) is bound by residues alanine 248, alanine 249, and alanine 251. Residue serine 252 participates in CoA binding. Valine 350 serves as a coordination point for K(+). Catalysis depends on proton acceptor residues histidine 354 and cysteine 384.

It belongs to the thiolase-like superfamily. Thiolase family. In terms of assembly, homotetramer.

It is found in the cytoplasm. The protein localises to the cytosol. It catalyses the reaction 2 acetyl-CoA = acetoacetyl-CoA + CoA. Its pathway is metabolic intermediate biosynthesis; (R)-mevalonate biosynthesis; (R)-mevalonate from acetyl-CoA: step 1/3. Functionally, acetyl-CoA acetyltransferase; part of the first module of ergosterol biosynthesis pathway that includes the early steps of the pathway, conserved across all eukaryotes, and which results in the formation of mevalonate from acetyl-coenzyme A (acetyl-CoA). ERG10 catalyzes the formation of acetoacetyl-CoA from acetyl-CoA. The first module starts with the action of the cytosolic acetyl-CoA acetyltransferase ERG10 that catalyzes the formation of acetoacetyl-CoA. The hydroxymethylglutaryl-CoA synthase ERG13 then condenses acetyl-CoA with acetoacetyl-CoA to form HMG-CoA. The rate-limiting step of the early module is the reduction to mevalonate by the 3-hydroxy-3-methylglutaryl-coenzyme A (HMG-CoA) reductases HMG1 and HMG2 which are derived from a single ancestral HMGR gene by gene duplication. The chain is Acetyl-CoA acetyltransferase from Saccharomyces cerevisiae (strain ATCC 204508 / S288c) (Baker's yeast).